Consider the following 355-residue polypeptide: Probable aldo-keto reductase 3 (355 aa).

Residue tyrosine 70 is the Proton donor of the active site. Histidine 138 is a binding site for substrate. 217–227 (SPLGRGFFSSG) provides a ligand contact to NADP(+).

It belongs to the aldo/keto reductase family.

The polypeptide is Probable aldo-keto reductase 3 (Oryza sativa subsp. japonica (Rice)).